The following is a 106-amino-acid chain: ATP synthase-coupling factor 6, mitochondrial (106 aa).

The protein belongs to the eukaryotic ATPase subunit F6 family. As to quaternary structure, F-type ATPases have 2 components, CF(1) - the catalytic core - and CF(0) - the membrane proton channel. CF(0) seems to have nine subunits: a, b, c, d, e, f, g, F6 and 8 (or A6L).

The protein resides in the mitochondrion. Its subcellular location is the mitochondrion inner membrane. Functionally, mitochondrial membrane ATP synthase (F(1)F(0) ATP synthase or Complex V) produces ATP from ADP in the presence of a proton gradient across the membrane which is generated by electron transport complexes of the respiratory chain. F-type ATPases consist of two structural domains, F(1) - containing the extramembraneous catalytic core and F(0) - containing the membrane proton channel, linked together by a central stalk and a peripheral stalk. During catalysis, ATP synthesis in the catalytic domain of F(1) is coupled via a rotary mechanism of the central stalk subunits to proton translocation. Part of the complex F(0) domain and the peripheric stalk, which acts as a stator to hold the catalytic alpha(3)beta(3) subcomplex and subunit a/ATP6 static relative to the rotary elements. The chain is ATP synthase-coupling factor 6, mitochondrial from Drosophila melanogaster (Fruit fly).